Consider the following 367-residue polypeptide: Glutamate 5-kinase (367 aa).

Lys-17 lines the ATP pocket. Substrate is bound by residues Ser-57, Asp-144, and Asn-156. ATP-binding positions include 176–177 and 217–223; these read SD and TGGMTSK. The PUA domain occupies 279–357; sequence AGALTLDEGA…SELPGELRRP (79 aa).

The protein belongs to the glutamate 5-kinase family.

The protein resides in the cytoplasm. It carries out the reaction L-glutamate + ATP = L-glutamyl 5-phosphate + ADP. It participates in amino-acid biosynthesis; L-proline biosynthesis; L-glutamate 5-semialdehyde from L-glutamate: step 1/2. Catalyzes the transfer of a phosphate group to glutamate to form L-glutamate 5-phosphate. The sequence is that of Glutamate 5-kinase from Mycobacterium avium (strain 104).